Consider the following 424-residue polypeptide: Tyrosine--tRNA ligase (424 aa).

Tyrosine 37 contacts L-tyrosine. A 'HIGH' region motif is present at residues proline 42 to serine 51. Tyrosine 174 and glutamine 178 together coordinate L-tyrosine. The 'KMSKS' region signature appears at lysine 234 to threonine 238. Lysine 237 provides a ligand contact to ATP. In terms of domain architecture, S4 RNA-binding spans serine 357–aspartate 422.

The protein belongs to the class-I aminoacyl-tRNA synthetase family. TyrS type 1 subfamily. As to quaternary structure, homodimer.

The protein resides in the cytoplasm. It catalyses the reaction tRNA(Tyr) + L-tyrosine + ATP = L-tyrosyl-tRNA(Tyr) + AMP + diphosphate + H(+). Catalyzes the attachment of tyrosine to tRNA(Tyr) in a two-step reaction: tyrosine is first activated by ATP to form Tyr-AMP and then transferred to the acceptor end of tRNA(Tyr). This Chromobacterium violaceum (strain ATCC 12472 / DSM 30191 / JCM 1249 / CCUG 213 / NBRC 12614 / NCIMB 9131 / NCTC 9757 / MK) protein is Tyrosine--tRNA ligase.